The sequence spans 489 residues: Betaine aldehyde dehydrogenase (489 aa).

Residues Thr26 and Asp93 each contribute to the K(+) site. Gly150–Trp152 is an NAD(+) binding site. Lys162 acts as the Charge relay system in catalysis. Lys176–Glu179 lines the NAD(+) pocket. Val180 is a binding site for K(+). NAD(+) is bound at residue Gly229–Thr232. Leu245 contacts K(+). Glu251 functions as the Proton acceptor in the catalytic mechanism. 3 residues coordinate NAD(+): Gly253, Cys285, and Glu386. Cys285 serves as the catalytic Nucleophile. A Cysteine sulfenic acid (-SOH) modification is found at Cys285. The K(+) site is built by Lys456 and Gly459. Glu463 serves as the catalytic Charge relay system.

Belongs to the aldehyde dehydrogenase family. As to quaternary structure, dimer of dimers. Requires K(+) as cofactor.

The catalysed reaction is betaine aldehyde + NAD(+) + H2O = glycine betaine + NADH + 2 H(+). Its pathway is amine and polyamine biosynthesis; betaine biosynthesis via choline pathway; betaine from betaine aldehyde: step 1/1. Involved in the biosynthesis of the osmoprotectant glycine betaine. Catalyzes the irreversible oxidation of betaine aldehyde to the corresponding acid. In Burkholderia cenocepacia (strain ATCC BAA-245 / DSM 16553 / LMG 16656 / NCTC 13227 / J2315 / CF5610) (Burkholderia cepacia (strain J2315)), this protein is Betaine aldehyde dehydrogenase.